A 221-amino-acid polypeptide reads, in one-letter code: UPF0758 protein NTHI1125 (221 aa).

An MPN domain is found at 98–221; sequence PIINDLETVK…CYSFAENCLL (124 aa). His-170, His-172, and Asp-183 together coordinate Zn(2+). Residues 170–183 carry the JAMM motif motif; sequence HNHPSGITEPSYSD.

The protein belongs to the UPF0758 family.

The polypeptide is UPF0758 protein NTHI1125 (Haemophilus influenzae (strain 86-028NP)).